The sequence spans 614 residues: MIQPLLVVTCLVVFPYQVSSIILESGNVNDYEVVYPQKVTSLPKGAVQQPEQKYEDTMQYEFKVNGEPVVLHLEKNKGLFSEDYSETHYSPDGREITTNPPVEDHCYYHGHIQNEADSTASISACNGLKGHFKLQGETYLIEPLKIPESEAHAVYKYENIEKEDEAPKMCGVTETNWESDEPIRKASQLVATSEQRRNIQKYIELVIVVDNVMFRKYTGNSTAIRTRIYEIVNTLNVVFRNVHIFVALVGIEIWNKKDQIKVKSAESVTLDLFGDWREKDLLRRKRHDNAQLLTGIDLNEQTLGIAPMSGMCKPKSSVGLIQDYCKSYLLVAIVMAHELGHNLGMDHDDGNCICREMPCIMSPEAGSKPAFYFSDCSWNQYQKFRNDIKSKCIDNKPLKTDIVSPAFCGNYFVEEGEECDCGFPGNCRNPCCNATTCKLTPGSECGDGECCDQCRIQTAGTECRPAWDECDVPEYCTGQSAECPTDVLQRNGQPCKNNNGYCYNGVCPILTNQCISLFGSSVTVAPDRCFNNNLQGTENFHCGMENGRYIKCKPQDKKCGRLFCVEPPTGGGINCKSIRSEGDPDHGMVDLGTKCADGKVCNSNRQCVDVNTAY.

A signal peptide spans 1–20 (MIQPLLVVTCLVVFPYQVSS). A propeptide spanning residues 21–193 (IILESGNVND…RKASQLVATS (173 aa)) is cleaved from the precursor. Glutamate 194 carries the pyrrolidone carboxylic acid (Glu) modification. Residues 201-397 (KYIELVIVVD…IKSKCIDNKP (197 aa)) enclose the Peptidase M12B domain. A glycan (N-linked (GlcNAc...) asparagine) is linked at asparagine 220. Cystine bridges form between cysteine 312/cysteine 392, cysteine 352/cysteine 376, cysteine 354/cysteine 359, cysteine 408/cysteine 437, cysteine 419/cysteine 432, cysteine 421/cysteine 427, cysteine 431/cysteine 454, cysteine 445/cysteine 451, cysteine 450/cysteine 476, cysteine 463/cysteine 483, cysteine 470/cysteine 502, cysteine 495/cysteine 507, cysteine 514/cysteine 564, cysteine 529/cysteine 575, cysteine 542/cysteine 552, cysteine 559/cysteine 601, and cysteine 595/cysteine 607. Zn(2+) is bound at residue histidine 337. Residues 337–348 (HELGHNLGMDHD) carry the Metal-binding motif. Glutamate 338 (proton acceptor) is an active-site residue. Zn(2+) contacts are provided by histidine 341 and histidine 347. In terms of domain architecture, Disintegrin spans 405–491 (PAFCGNYFVE…ECPTDVLQRN (87 aa)). Ca(2+) is bound by residues asparagine 410, phenylalanine 412, glutamate 414, glutamate 417, and aspartate 420. Residue asparagine 433 is glycosylated (N-linked (GlcNAc...) asparagine). The D/ECD-tripeptide motif lies at 469 to 471 (ECD). 2 residues coordinate Ca(2+): aspartate 471 and aspartate 486.

Belongs to the venom metalloproteinase (M12B) family. P-III subfamily. In terms of assembly, homodimer; disulfide-linked. Heterodimer of A and B subunits; disulfide-linked. Zn(2+) is required as a cofactor. N-glycosylated. Post-translationally, the N-terminus is blocked. As to expression, expressed by the venom gland (at protein level). Expressed by the venom gland.

It localises to the secreted. Its activity is regulated as follows. The proteolytic activity of the heterodimer of A and B subunits requires Zn(2+) and Ca(2+) ions. In terms of biological role, heterodimer (A and B subunits): Zinc metalloprotease that has fibrinogenolytic and hemorrhagic activities. Cleaves insulin B chain preferably at '40-Tyr-|-Leu-41' bond, but also at '28-Gln-|-His-29' and '34-His-|-Leu-35' bonds. Hydrolyzes effectively isolated extracellular matrix (ECM) bovine fibronectin, and only slightly, basal membrane (BM) proteins human collagen IV and murine laminin, in vitro. Cleaves nidogen-1 (at '350-Ser-|-Phe-351' and '380-Tyr-|-Asn-381' bonds), but not laminin, in a solubilized BM preparation. Hydrolyzes plasma proteins involved in blood coagulation in vitro. It slightly shortens prothrombin time and significantly prolongs thrombin time. Has potent alpha-fibrinogenase activity cleaving human fibrinogen alpha chain at '441-Glu-|-Leu-442' and '539-Glu-|-Phe-540' bonds, and to a lesser extent, beta chain at '52-Lys-|-Arg-53' and '48-Pro-|-Leu-49' bonds, but does not cleave gamma chain. Hydrolyzes bovine prothrombin at '200-Ser-|-Gly-201' bond, but does not activate it, however, it cleaves fragment 1 and prethrombin 1 from it. Hydrolyzes bovine factor X heavy chain, but the cleavage does not produce an activated factor Xa heavy chain. No hydrolysis or activation of plasminogen. The ability to degrade some of the ECM, BM and plasma proteins is likely the main contributor to its hemorrhagic activity. Inhibits platelet aggregation induced by collagen in vitro. Its binding to glycosaminoglycans (GAGs) may assist in concentrating it in the proximity of blood vessel walls enabling in vivo degradation of BM protein components. Cytotoxic to cultured HeLa cancer cells in a concentration- and time-dependent manner. In the solubilized BM preparation (Matrigel), it induces morphological changes in the HeLa cells and inhibits their adhesion, however, the viability of the cells is not reduced. The chain is Zinc metalloproteinase-disintegrin-like protein H4 subunit A from Vipera ammodytes ammodytes (Western sand viper).